The primary structure comprises 368 residues: WD repeat-containing protein RUP2 (368 aa).

WD repeat units follow at residues 38–77, 97–138, 141–184, 192–232, 236–276, 279–318, and 330–368; these read SASD…RNNA, CTPA…PVFE, EHGG…EESV, ICRS…DPAL, GHTK…RTYE, VNNR…PVWV, and SDKR…KRKP.

As to quaternary structure, interacts with UVR8.

Its subcellular location is the nucleus. It is found in the cytoplasm. It localises to the cytosol. Functions in association with RUP1 as repressor of UV-B-induced photomorphogenesis mediated by UVR8 and HY5. Plays a crucial negative feedback regulatory role downstream of UVR8-COP1 to inhibit UVR8 function, balance UV-B-specific responses and ensure normal plant growth. Is involved in the regulation of photoperiodic flowering and vegetative development. May act as negative regulator of photoperiodic flowering by suppressing flowering through the action of CONSTANS (CO) and FLOWERING LOCUS T (FT). This Arabidopsis thaliana (Mouse-ear cress) protein is WD repeat-containing protein RUP2 (RUP2).